The chain runs to 450 residues: Chromosomal replication initiator protein DnaA (450 aa).

The segment at 1 to 79 (MENIHDLWNR…TGEELLIKFI (79 aa)) is domain I, interacts with DnaA modulators. Residues 79-111 (ITPPNQSEDDFEFQRSSKKHRKPYEESTDFPQS) are domain II. Residues 112–328 (MLNPKYTFDT…GALIRVVAYS (217 aa)) are domain III, AAA+ region. ATP is bound by residues Gly156, Gly158, Lys159, and Thr160. The domain IV, binds dsDNA stretch occupies residues 329-450 (SLINKEITAD…KEIEEKLKQL (122 aa)).

This sequence belongs to the DnaA family. In terms of assembly, oligomerizes as a right-handed, spiral filament on DNA at oriC.

The protein resides in the cytoplasm. Its function is as follows. Plays an essential role in the initiation and regulation of chromosomal replication. ATP-DnaA binds to the origin of replication (oriC) to initiate formation of the DNA replication initiation complex once per cell cycle. Binds the DnaA box (a 9 base pair repeat at the origin) and separates the double-stranded (ds)DNA. Forms a right-handed helical filament on oriC DNA; dsDNA binds to the exterior of the filament while single-stranded (ss)DNA is stabiized in the filament's interior. The ATP-DnaA-oriC complex binds and stabilizes one strand of the AT-rich DNA unwinding element (DUE), permitting loading of DNA polymerase. After initiation quickly degrades to an ADP-DnaA complex that is not apt for DNA replication. Binds acidic phospholipids. The protein is Chromosomal replication initiator protein DnaA of Geobacillus sp. (strain WCH70).